The chain runs to 406 residues: Phosphopentomutase (406 aa).

The Mn(2+) site is built by aspartate 10, aspartate 305, histidine 310, aspartate 346, histidine 347, and histidine 358.

Belongs to the phosphopentomutase family. Mn(2+) is required as a cofactor.

It localises to the cytoplasm. It carries out the reaction 2-deoxy-alpha-D-ribose 1-phosphate = 2-deoxy-D-ribose 5-phosphate. It catalyses the reaction alpha-D-ribose 1-phosphate = D-ribose 5-phosphate. It participates in carbohydrate degradation; 2-deoxy-D-ribose 1-phosphate degradation; D-glyceraldehyde 3-phosphate and acetaldehyde from 2-deoxy-alpha-D-ribose 1-phosphate: step 1/2. In terms of biological role, isomerase that catalyzes the conversion of deoxy-ribose 1-phosphate (dRib-1-P) and ribose 1-phosphate (Rib-1-P) to deoxy-ribose 5-phosphate (dRib-5-P) and ribose 5-phosphate (Rib-5-P), respectively. The protein is Phosphopentomutase of Allorhizobium ampelinum (strain ATCC BAA-846 / DSM 112012 / S4) (Agrobacterium vitis (strain S4)).